A 634-amino-acid polypeptide reads, in one-letter code: MSISGLLLSVALLPSVVSAHDHVYFDPPSSGSPFLGPQIPLTGPPALTGTHEFTLRHIYQRGTRDQPDLHRRLDIKPHTRLWAVSDDGLEKELVTFDTPLVASSSPLTIQRLADRRLSVIEGYLAAARSSGEAVALSPSEWVMDTLAGPNVTDKESVLTFAKMTANDYIEEPGTEDWHYIHGRFNYSSSFGWQSDGLRGHIYADKTNSTIVISLKGTSPALFDGAGTTTNDKINDNLFFSCCCGQGGSYLWRQVCDCQQSAFTANLTCIVEAMNDENRYYRAAIDLYSNVTDMYPDANVWMTGHSLGGAMSSLLGLTFGLPVVTFEAVPEALPAARLGLPSPPGHDPRLPQSRQYTGAYHFGHTADPVYMGTCNGVGSICTWGGYAMESACHTGQMCVYDTVEDKGWRVALSTHRIRAVISDVLEVYEDLPPCAPEEECYDCELWKFFKSNGSESTTTSTTTTTTAPTTTRTSTCKTPGWWGCLDESTTTTTITSTTTTTTTSTSTCKTPGWFGCKDPTTTTEATPAPSVTTTIPTPTTYPTSSTSTCKDPGWFGCRDPSSTTASITSSPSTTSTCDDPGFFWGCYDESTTATHPITPGPSAPYSTPSPTNKHTCTSSIFFGLICVGSTGTELR.

Over 1 to 4 the chain is Cytoplasmic; sequence MSIS. The chain crosses the membrane as a helical; Signal-anchor for type II membrane protein span at residues 5–25; it reads GLLLSVALLPSVVSAHDHVYF. Residues 26 to 634 are Lumenal-facing; sequence DPPSSGSPFL…CVGSTGTELR (609 aa). Asn-150, Asn-185, Asn-207, Asn-265, and Asn-289 each carry an N-linked (GlcNAc...) asparagine glycan. Residue Ser-305 is the Charge relay system of the active site. Asn-451 carries an N-linked (GlcNAc...) asparagine glycan. A disordered region spans residues 518–544; it reads PTTTTEATPAPSVTTTIPTPTTYPTSS.

Belongs to the AB hydrolase superfamily. Lipase family. As to quaternary structure, binds to both phosphatidylinositol (PI) and phosphatidylinositol 3,5-bisphosphate (PIP2).

The protein localises to the endosome. It is found in the multivesicular body membrane. The protein resides in the prevacuolar compartment membrane. The catalysed reaction is a triacylglycerol + H2O = a diacylglycerol + a fatty acid + H(+). Lipase which is essential for lysis of subvacuolar cytoplasm to vacuole targeted bodies and intravacuolar autophagic bodies. Involved in the lysis of intravacuolar multivesicular body (MVB) vesicles. The intravacuolar membrane disintegration by atg15 is critical to life span extension. In Neosartorya fischeri (strain ATCC 1020 / DSM 3700 / CBS 544.65 / FGSC A1164 / JCM 1740 / NRRL 181 / WB 181) (Aspergillus fischerianus), this protein is Putative lipase atg15 (atg15).